We begin with the raw amino-acid sequence, 123 residues long: Large ribosomal subunit protein bL12 (123 aa).

Belongs to the bacterial ribosomal protein bL12 family. Homodimer. Part of the ribosomal stalk of the 50S ribosomal subunit. Forms a multimeric L10(L12)X complex, where L10 forms an elongated spine to which 2 to 4 L12 dimers bind in a sequential fashion. Binds GTP-bound translation factors.

Forms part of the ribosomal stalk which helps the ribosome interact with GTP-bound translation factors. Is thus essential for accurate translation. The protein is Large ribosomal subunit protein bL12 of Desulfotalea psychrophila (strain LSv54 / DSM 12343).